We begin with the raw amino-acid sequence, 256 residues long: Imidazole glycerol phosphate synthase subunit HisF (256 aa).

Active-site residues include aspartate 12 and aspartate 131.

The protein belongs to the HisA/HisF family. In terms of assembly, heterodimer of HisH and HisF.

It is found in the cytoplasm. The catalysed reaction is 5-[(5-phospho-1-deoxy-D-ribulos-1-ylimino)methylamino]-1-(5-phospho-beta-D-ribosyl)imidazole-4-carboxamide + L-glutamine = D-erythro-1-(imidazol-4-yl)glycerol 3-phosphate + 5-amino-1-(5-phospho-beta-D-ribosyl)imidazole-4-carboxamide + L-glutamate + H(+). It participates in amino-acid biosynthesis; L-histidine biosynthesis; L-histidine from 5-phospho-alpha-D-ribose 1-diphosphate: step 5/9. Functionally, IGPS catalyzes the conversion of PRFAR and glutamine to IGP, AICAR and glutamate. The HisF subunit catalyzes the cyclization activity that produces IGP and AICAR from PRFAR using the ammonia provided by the HisH subunit. This is Imidazole glycerol phosphate synthase subunit HisF from Bifidobacterium longum (strain DJO10A).